A 149-amino-acid polypeptide reads, in one-letter code: Putative pre-16S rRNA nuclease (149 aa).

This sequence belongs to the YqgF nuclease family.

Its subcellular location is the cytoplasm. Functionally, could be a nuclease involved in processing of the 5'-end of pre-16S rRNA. In Synechococcus elongatus (strain ATCC 33912 / PCC 7942 / FACHB-805) (Anacystis nidulans R2), this protein is Putative pre-16S rRNA nuclease.